The following is a 1179-amino-acid chain: Serine/threonine-protein kinase pakG (1179 aa).

The stretch at 12 to 53 (SKTNEDIELIKQKLKEDRELLEKERAQFEEERKIIFESLNKV) forms a coiled coil. In terms of domain architecture, CRIB spans 111 to 124 (IGTPFNVQHKVHVD). Residues 139–390 (FLIDCILGTG…AIELLTHPFL (252 aa)) enclose the Protein kinase domain. ATP contacts are provided by residues 145–153 (LGTGSYGTV) and Lys168. Asp257 acts as the Proton acceptor in catalysis. 4 disordered regions span residues 414-469 (KKKK…SSLD), 589-631 (IGNS…NNNN), 705-1086 (SSSS…PITL), and 1121-1179 (TEIN…SPKK). Positions 621-668 (NNNNNNNNNNNEFLINQIKKELILDFNENMKQYINQQLTNLKEEMLKE) form a coiled coil. Composition is skewed to low complexity over residues 705–723 (SSSS…SNSS) and 743–761 (LPPS…TSSP). The span at 762–776 (SPSPSPSPSPSPSSP) shows a compositional bias: pro residues. 2 stretches are compositionally biased toward low complexity: residues 777-788 (LPSSSTSTVNTP) and 812-833 (NNNN…NNNN). The segment covering 834–857 (VIQSPKLNNRPLSPTTPTKQFNNR) has biased composition (polar residues). A compositionally biased stretch (low complexity) spans 864–891 (FNNRPPSPSKFNNRPPSPSNRPLSPKNS). The span at 892 to 946 (YNSLEKSNNGSISNNRPLSPKNSLEKSTTQNNTSSEDISTTTVTVTSEQGGTPIT) shows a compositional bias: polar residues. Residues 954–963 (RPKPSPPPIP) show a composition bias toward pro residues. Low complexity-rich tracts occupy residues 964-997 (MNKS…TIAA), 1024-1046 (TTIT…SPNS), and 1053-1077 (ITTS…SSSN). Over residues 1121–1135 (TEINLPSSSPSTPQK) the composition is skewed to polar residues. Residues 1137 to 1158 (NTPSSIPTTPTTPTTNGGSVSS) are compositionally biased toward low complexity.

It belongs to the protein kinase superfamily. STE Ser/Thr protein kinase family. STE20 subfamily. The cofactor is Mg(2+).

The catalysed reaction is L-seryl-[protein] + ATP = O-phospho-L-seryl-[protein] + ADP + H(+). It catalyses the reaction L-threonyl-[protein] + ATP = O-phospho-L-threonyl-[protein] + ADP + H(+). In Dictyostelium discoideum (Social amoeba), this protein is Serine/threonine-protein kinase pakG.